A 111-amino-acid polypeptide reads, in one-letter code: Somatostatin-1B (111 aa).

Positions 1 to 19 (MQLLSSLVSLLLVLYSVRA) are cleaved as a signal peptide. A propeptide spanning residues 20-87 (AAVLPVEERN…RLEERAVYNR (68 aa)) is cleaved from the precursor. Cysteines 100 and 111 form a disulfide.

It belongs to the somatostatin family.

Its subcellular location is the secreted. Functionally, somatostatin inhibits the release of somatotropin. The chain is Somatostatin-1B (sst1b) from Carassius auratus (Goldfish).